Reading from the N-terminus, the 791-residue chain is Valine--tRNA ligase (791 aa).

Positions 40–50 (PTVSGKMHMGH) match the 'HIGH' region motif. Residues 521 to 525 (KMSKS) carry the 'KMSKS' region motif. An ATP-binding site is contributed by K524.

The protein belongs to the class-I aminoacyl-tRNA synthetase family. ValS type 2 subfamily.

The protein localises to the cytoplasm. It catalyses the reaction tRNA(Val) + L-valine + ATP = L-valyl-tRNA(Val) + AMP + diphosphate. In terms of biological role, catalyzes the attachment of valine to tRNA(Val). As ValRS can inadvertently accommodate and process structurally similar amino acids such as threonine, to avoid such errors, it has a 'posttransfer' editing activity that hydrolyzes mischarged Thr-tRNA(Val) in a tRNA-dependent manner. The protein is Valine--tRNA ligase of Thermoplasma acidophilum (strain ATCC 25905 / DSM 1728 / JCM 9062 / NBRC 15155 / AMRC-C165).